Reading from the N-terminus, the 151-residue chain is Large ribosomal subunit protein bL9 (151 aa).

Belongs to the bacterial ribosomal protein bL9 family.

Binds to the 23S rRNA. This Desulfotalea psychrophila (strain LSv54 / DSM 12343) protein is Large ribosomal subunit protein bL9.